The primary structure comprises 148 residues: UPF0591 membrane protein C15E1.02c (148 aa).

A run of 3 helical transmembrane segments spans residues 14–34 (AILLGIAFDHAASFLVYGPLM), 80–102 (LLQLTGTVTLKGAFFVGLYVFGA), and 122–142 (ILVKTISSLVKSVGLSVALIG).

This sequence belongs to the UPF0591 family.

It localises to the membrane. In Schizosaccharomyces pombe (strain 972 / ATCC 24843) (Fission yeast), this protein is UPF0591 membrane protein C15E1.02c.